We begin with the raw amino-acid sequence, 179 residues long: Adenine phosphoribosyltransferase (179 aa).

The protein belongs to the purine/pyrimidine phosphoribosyltransferase family. In terms of assembly, homodimer.

It is found in the cytoplasm. The catalysed reaction is AMP + diphosphate = 5-phospho-alpha-D-ribose 1-diphosphate + adenine. It functions in the pathway purine metabolism; AMP biosynthesis via salvage pathway; AMP from adenine: step 1/1. Its function is as follows. Catalyzes a salvage reaction resulting in the formation of AMP, that is energically less costly than de novo synthesis. This chain is Adenine phosphoribosyltransferase, found in Actinobacillus pleuropneumoniae serotype 5b (strain L20).